A 122-amino-acid chain; its full sequence is Large ribosomal subunit protein uL14c (122 aa).

Belongs to the universal ribosomal protein uL14 family. Part of the 50S ribosomal subunit.

Its subcellular location is the plastid. Its function is as follows. Binds to 23S rRNA. This chain is Large ribosomal subunit protein uL14c, found in Euglena longa (Euglenophycean alga).